The sequence spans 361 residues: Phospho-N-acetylmuramoyl-pentapeptide-transferase (361 aa).

A run of 10 helical transmembrane segments spans residues 28-48, 74-94, 99-119, 133-153, 168-188, 203-223, 236-256, 263-283, 288-308, and 338-358; these read LAII…IEFL, TMGG…LADL, IWIT…DDYA, SKLL…EYLD, LSLD…VGSS, VPIA…GNLI, TGEL…FLWF, VFMG…ISVI, IVLA…ILQV, and KVVI…LSSL.

This sequence belongs to the glycosyltransferase 4 family. MraY subfamily. Mg(2+) is required as a cofactor.

It localises to the cell membrane. The catalysed reaction is UDP-N-acetyl-alpha-D-muramoyl-L-alanyl-gamma-D-glutamyl-meso-2,6-diaminopimeloyl-D-alanyl-D-alanine + di-trans,octa-cis-undecaprenyl phosphate = di-trans,octa-cis-undecaprenyl diphospho-N-acetyl-alpha-D-muramoyl-L-alanyl-D-glutamyl-meso-2,6-diaminopimeloyl-D-alanyl-D-alanine + UMP. The protein operates within cell wall biogenesis; peptidoglycan biosynthesis. Its function is as follows. Catalyzes the initial step of the lipid cycle reactions in the biosynthesis of the cell wall peptidoglycan: transfers peptidoglycan precursor phospho-MurNAc-pentapeptide from UDP-MurNAc-pentapeptide onto the lipid carrier undecaprenyl phosphate, yielding undecaprenyl-pyrophosphoryl-MurNAc-pentapeptide, known as lipid I. This Rickettsia rickettsii protein is Phospho-N-acetylmuramoyl-pentapeptide-transferase.